The following is a 507-amino-acid chain: Maturase K (507 aa).

This sequence belongs to the intron maturase 2 family. MatK subfamily.

It is found in the plastid. The protein localises to the chloroplast. Its function is as follows. Usually encoded in the trnK tRNA gene intron. Probably assists in splicing its own and other chloroplast group II introns. This chain is Maturase K, found in Magnolia champaca (Yellow jade orchid tree).